Here is a 249-residue protein sequence, read N- to C-terminus: Olfactory receptor 1571 (249 aa).

The helical transmembrane segment at 1-9 (LLMCNLCFA) threads the bilayer. The Extracellular segment spans residues 10–40 (DICFTSASIPTNLVNIQTKNKVITYEGCISQ). Residues cysteine 37 and cysteine 119 are joined by a disulfide bond. A helical transmembrane segment spans residues 41 to 60 (VYFFILFGVLDNFLLAVMAY). Residues 61–82 (DRYVAICHPLHYTVIMNRRLCG) lie on the Cytoplasmic side of the membrane. A helical membrane pass occupies residues 83 to 103 (LLVLGSWVTTALNSLLQSSMA). Topologically, residues 104–136 (LRLSFCTDLKIPHFVCELNQLVLLACNDTFPND) are extracellular. Asparagine 130 is a glycosylation site (N-linked (GlcNAc...) asparagine). Residues 137–158 (MVMYFAAVLLGGGPLAGILYSY) form a helical membrane-spanning segment. The Cytoplasmic segment spans residues 159–180 (SKIVSSIRAISSSQGKYKAFST). The helical transmembrane segment at 181 to 200 (CASHLSVVSLFYSTLLGVYL) threads the bilayer. Topologically, residues 201 to 210 (SSSFTQNSHS) are extracellular. Residues 211-232 (TARASVMYSVVTPMLNPFIYSL) traverse the membrane as a helical segment. Residues 233–249 (RNKDLMGALRRLFRRKP) are Cytoplasmic-facing.

It belongs to the G-protein coupled receptor 1 family. Tongue specific.

It is found in the cell membrane. Its function is as follows. Possible taste receptor. This is Olfactory receptor 1571 (Olr1571) from Rattus norvegicus (Rat).